The sequence spans 400 residues: Nicotinate phosphoribosyltransferase (400 aa).

Residue histidine 220 is modified to Phosphohistidine; by autocatalysis.

This sequence belongs to the NAPRTase family. Transiently phosphorylated on a His residue during the reaction cycle. Phosphorylation strongly increases the affinity for substrates and increases the rate of nicotinate D-ribonucleotide production. Dephosphorylation regenerates the low-affinity form of the enzyme, leading to product release.

The catalysed reaction is nicotinate + 5-phospho-alpha-D-ribose 1-diphosphate + ATP + H2O = nicotinate beta-D-ribonucleotide + ADP + phosphate + diphosphate. Its pathway is cofactor biosynthesis; NAD(+) biosynthesis; nicotinate D-ribonucleotide from nicotinate: step 1/1. Functionally, catalyzes the synthesis of beta-nicotinate D-ribonucleotide from nicotinate and 5-phospho-D-ribose 1-phosphate at the expense of ATP. This chain is Nicotinate phosphoribosyltransferase, found in Escherichia coli O127:H6 (strain E2348/69 / EPEC).